Reading from the N-terminus, the 145-residue chain is Pseudoazurin (145 aa).

An N-terminal signal peptide occupies residues Met-1 to Ala-22. The region spanning Val-27 to Gly-115 is the Plastocyanin-like domain. Residues His-62, Cys-100, His-103, and Met-108 each coordinate Cu cation. The tract at residues Thr-126–Asn-145 is disordered.

As to quaternary structure, homodimer. The cofactor is Cu cation.

It is found in the periplasm. This soluble electron transfer copper protein is required for the inactivation of copper-containing nitrite reductase in the presence of oxygen. The polypeptide is Pseudoazurin (pazS) (Paracoccus pantotrophus (Thiosphaera pantotropha)).